An 85-amino-acid polypeptide reads, in one-letter code: Small ribosomal subunit protein bS18 (85 aa).

The protein belongs to the bacterial ribosomal protein bS18 family. As to quaternary structure, part of the 30S ribosomal subunit. Forms a tight heterodimer with protein bS6.

Binds as a heterodimer with protein bS6 to the central domain of the 16S rRNA, where it helps stabilize the platform of the 30S subunit. The protein is Small ribosomal subunit protein bS18 of Solidesulfovibrio magneticus (strain ATCC 700980 / DSM 13731 / RS-1) (Desulfovibrio magneticus).